The sequence spans 424 residues: Serine--tRNA ligase (424 aa).

An L-serine-binding site is contributed by threonine 231–glutamate 233. Residue arginine 262–glutamate 264 coordinates ATP. L-serine is bound at residue glutamate 285. Glutamate 349–serine 352 contacts ATP. Residue serine 385 participates in L-serine binding.

This sequence belongs to the class-II aminoacyl-tRNA synthetase family. Type-1 seryl-tRNA synthetase subfamily. Homodimer. The tRNA molecule binds across the dimer.

It is found in the cytoplasm. It catalyses the reaction tRNA(Ser) + L-serine + ATP = L-seryl-tRNA(Ser) + AMP + diphosphate + H(+). It carries out the reaction tRNA(Sec) + L-serine + ATP = L-seryl-tRNA(Sec) + AMP + diphosphate + H(+). It participates in aminoacyl-tRNA biosynthesis; selenocysteinyl-tRNA(Sec) biosynthesis; L-seryl-tRNA(Sec) from L-serine and tRNA(Sec): step 1/1. Its function is as follows. Catalyzes the attachment of serine to tRNA(Ser). Is also able to aminoacylate tRNA(Sec) with serine, to form the misacylated tRNA L-seryl-tRNA(Sec), which will be further converted into selenocysteinyl-tRNA(Sec). This chain is Serine--tRNA ligase, found in Bacillus cytotoxicus (strain DSM 22905 / CIP 110041 / 391-98 / NVH 391-98).